Here is a 40-residue protein sequence, read N- to C-terminus: Photosystem II reaction center protein J (40 aa).

A helical membrane pass occupies residues 8-28; the sequence is IPLCLIGTVAGIAVIGLVGVF.

Belongs to the PsbJ family. PSII is composed of 1 copy each of membrane proteins PsbA, PsbB, PsbC, PsbD, PsbE, PsbF, PsbH, PsbI, PsbJ, PsbK, PsbL, PsbM, PsbT, PsbX, PsbY, PsbZ, Psb30/Ycf12, at least 3 peripheral proteins of the oxygen-evolving complex and a large number of cofactors. It forms dimeric complexes.

It localises to the plastid. The protein localises to the chloroplast thylakoid membrane. One of the components of the core complex of photosystem II (PSII). PSII is a light-driven water:plastoquinone oxidoreductase that uses light energy to abstract electrons from H(2)O, generating O(2) and a proton gradient subsequently used for ATP formation. It consists of a core antenna complex that captures photons, and an electron transfer chain that converts photonic excitation into a charge separation. The polypeptide is Photosystem II reaction center protein J (Triticum aestivum (Wheat)).